Here is a 76-residue protein sequence, read N- to C-terminus: Mu-scoloptoxin(15)-Ssm1a (76 aa).

Positions 1–23 (MEKKIIFLVFLVALLALPGFIST) are cleaved as a signal peptide. Residues 33–36 (KKRK) are important for inhibition of KCNQ4. Cystine bridges form between C43–C69 and C47–C71.

It belongs to the scoloptoxin-15 family. In terms of tissue distribution, expressed by the venom gland.

It localises to the secreted. Blocks voltage-gated potassium channels Kv7.4/KCNQ4 (IC(50)=2.5 uM), Kv7.1/KCNQ1 (IC(50)=2.8 uM), Kv7.2/KCNQ2 (IC(50)=2.7 uM) and Kv7.5/KCNQ5 (IC(50)=2.7 uM). Targets the pore domain, in particular negatively charged residues 'Asp-266' and 'Asp-288', of KCNQ4 and probably other KCNQ channel family members where these residues are conserved. In vivo, shows vasoconstrictive activity resulting in acute hypertension when injected intravenously in mice. Also induces coronary vasospasms ultimately leading to heart failure. Induces seizures when injected into the hippocampus of mice. Decreases respiratory rate while increasing respiratory amplitude, probably by triggering a contraction of the bronchial ring. The polypeptide is Mu-scoloptoxin(15)-Ssm1a (Scolopendra mutilans (Chinese red-headed centipede)).